Reading from the N-terminus, the 258-residue chain is Apolipoprotein A-I (258 aa).

The signal sequence occupies residues 1–18 (MKFLVLALTILLAAGTQA). Residues 32–63 (VKAALNMYIAQVKLTAQRSIDLLDDTEYKEYK) are 3 X approximate tandem repeats. 2 repeat units span residues 64–85 (MQLSQSLDNLQQFADSTSKSWP) and 86–106 (PTPRSSAPSCDATATVRAEVM). Residues 64-258 (MQLSQSLDNL…WLSTRPSARP (195 aa)) are 10 X approximate tandem repeats. A 3; half-length repeat occupies 107–117 (KDVEDVRTQLE). 7 tandem repeats follow at residues 118–139 (PKRAELTEVLNKHIDEYRKKLE), 140–161 (PLIKQHIELRRTEMDAFRAKID), 162–183 (PVVEEMRAKVAVNVEETKTKLM), 184–205 (PIVEIVRAKLTERLEELRTLAA), 206–227 (PYAEEYKEQMFKAVGEVREKVA), 228–238 (PLSEDFKARWA), and 239–258 (PPPRRPSKSSWLSTRPSARP). A disordered region spans residues 233-258 (FKARWAPPPRRPSKSSWLSTRPSARP). The segment covering 246-258 (KSSWLSTRPSARP) has biased composition (polar residues).

It belongs to the apolipoprotein A1/A4/E family. As to expression, major protein of plasma HDL, also found in chylomicrons. Expressed in liver, intestine and muscle.

The protein localises to the secreted. In terms of biological role, participates in the reverse transport of cholesterol from tissues to the liver for excretion by promoting cholesterol efflux from tissues and by acting as a cofactor for the lecithin cholesterol acyltransferase (LCAT). The chain is Apolipoprotein A-I (apoa1) from Salmo salar (Atlantic salmon).